A 301-amino-acid chain; its full sequence is Acetylglutamate kinase (301 aa).

Substrate is bound by residues 71-72 (GG), Arg93, and Asn198.

It belongs to the acetylglutamate kinase family. ArgB subfamily.

It localises to the cytoplasm. It carries out the reaction N-acetyl-L-glutamate + ATP = N-acetyl-L-glutamyl 5-phosphate + ADP. It participates in amino-acid biosynthesis; L-arginine biosynthesis; N(2)-acetyl-L-ornithine from L-glutamate: step 2/4. Its function is as follows. Catalyzes the ATP-dependent phosphorylation of N-acetyl-L-glutamate. The sequence is that of Acetylglutamate kinase from Zymomonas mobilis subsp. mobilis (strain ATCC 31821 / ZM4 / CP4).